The primary structure comprises 373 residues: Arabinonate dehydratase (373 aa).

Mg(2+)-binding residues include aspartate 199, glutamate 225, and glutamate 251.

The protein belongs to the mandelate racemase/muconate lactonizing enzyme family. As to quaternary structure, homooctamer. The cofactor is Mg(2+).

The enzyme catalyses D-arabinonate = 2-dehydro-3-deoxy-D-arabinonate + H2O. Its activity is regulated as follows. Inhibited by substrate levels above 8 mM. Functionally, catalyzes the dehydration of D-arabinonate to 2-keto-3-deoxy-D-arabinonate. Participates in a pentose oxidation pathway that converts D-arabinonate to 2-oxoglutarate. This chain is Arabinonate dehydratase, found in Saccharolobus solfataricus (strain ATCC 35092 / DSM 1617 / JCM 11322 / P2) (Sulfolobus solfataricus).